Reading from the N-terminus, the 368-residue chain is Phosphate acyltransferase (368 aa).

The disordered stretch occupies residues 337–368 (LEQAARDASGAGQASPIAGQPAEPYAAQSSKA).

This sequence belongs to the PlsX family. Homodimer. Probably interacts with PlsY.

The protein localises to the cytoplasm. The enzyme catalyses a fatty acyl-[ACP] + phosphate = an acyl phosphate + holo-[ACP]. It participates in lipid metabolism; phospholipid metabolism. In terms of biological role, catalyzes the reversible formation of acyl-phosphate (acyl-PO(4)) from acyl-[acyl-carrier-protein] (acyl-ACP). This enzyme utilizes acyl-ACP as fatty acyl donor, but not acyl-CoA. In Paraburkholderia phytofirmans (strain DSM 17436 / LMG 22146 / PsJN) (Burkholderia phytofirmans), this protein is Phosphate acyltransferase.